A 193-amino-acid chain; its full sequence is Penicillin-binding protein activator LpoB (193 aa).

Positions 1-16 (MKRYLSVALAALVLTG) are cleaved as a signal peptide. The N-palmitoyl cysteine moiety is linked to residue cysteine 17. A lipid anchor (S-diacylglycerol cysteine) is attached at cysteine 17. Residues 24-55 (EPTTPPVTIEPVTPPVPETPPPVDNVPPPPKM) form a disordered region. Residues 35–54 (VTPPVPETPPPVDNVPPPPK) show a composition bias toward pro residues.

Belongs to the LpoB family. Interacts with PBP1b.

It is found in the cell outer membrane. Functionally, regulator of peptidoglycan synthesis that is essential for the function of penicillin-binding protein 1B (PBP1b). The chain is Penicillin-binding protein activator LpoB from Yersinia enterocolitica serotype O:8 / biotype 1B (strain NCTC 13174 / 8081).